The following is an 833-amino-acid chain: Zinc phosphodiesterase ELAC protein 2 homolog (833 aa).

The transit peptide at methionine 1–histidine 19 directs the protein to the mitochondrion. Residues leucine 624–proline 646 are compositionally biased toward pro residues. The segment at leucine 624–leucine 652 is disordered.

This sequence belongs to the RNase Z family. Homodimer. Requires Zn(2+) as cofactor. In terms of tissue distribution, highly expressed in the germline.

The protein resides in the mitochondrion. It is found in the nucleus. The catalysed reaction is Endonucleolytic cleavage of RNA, removing extra 3' nucleotides from tRNA precursor, generating 3' termini of tRNAs. A 3'-hydroxy group is left at the tRNA terminus and a 5'-phosphoryl group is left at the trailer molecule.. Functionally, zinc phosphodiesterase, which displays some tRNA 3'-processing endonuclease activity. Probably involved in tRNA maturation, by removing a 3'-trailer from precursor tRNA. Involved in germline proliferation. May be required for both mitosis and meiosis in germ cells. Does not regulate the mitochondrial unfolded protein response following mitochondrial stress. In terms of biological role, plays a role in mitochondrial unfolded protein response. Upon mitochondrial stress is exported from the nucleus where its tRNA endonuclease activity is negatively regulated. In response to mitochondrial stress, might be involved in activating a transcriptional response in an ATFS-1- and DVE-1-dependent manner. May play a role in negatively regulating the mitochondrial membrane potential. The sequence is that of Zinc phosphodiesterase ELAC protein 2 homolog from Caenorhabditis elegans.